A 342-amino-acid polypeptide reads, in one-letter code: Dihydroorotase (342 aa).

Zn(2+) is bound by residues His13 and His15. Residues His15–Arg17 and Asn41 contribute to the substrate site. Zn(2+) is bound by residues Lys98, His135, and His173. An N6-carboxylysine modification is found at Lys98. His135 serves as a coordination point for substrate. Position 218 (Leu218) interacts with substrate. Asp246 is a Zn(2+) binding site. The active site involves Asp246. Residues His250 and Ala262 each coordinate substrate.

The protein belongs to the metallo-dependent hydrolases superfamily. DHOase family. Class II DHOase subfamily. As to quaternary structure, homodimer. The cofactor is Zn(2+).

The enzyme catalyses (S)-dihydroorotate + H2O = N-carbamoyl-L-aspartate + H(+). It functions in the pathway pyrimidine metabolism; UMP biosynthesis via de novo pathway; (S)-dihydroorotate from bicarbonate: step 3/3. Catalyzes the reversible cyclization of carbamoyl aspartate to dihydroorotate. The protein is Dihydroorotase of Aliivibrio salmonicida (strain LFI1238) (Vibrio salmonicida (strain LFI1238)).